We begin with the raw amino-acid sequence, 569 residues long: Arginine--tRNA ligase (569 aa).

Residues 123–133 (ANPNGPLHVGH) carry the 'HIGH' region motif.

The protein belongs to the class-I aminoacyl-tRNA synthetase family.

Its subcellular location is the cytoplasm. It carries out the reaction tRNA(Arg) + L-arginine + ATP = L-arginyl-tRNA(Arg) + AMP + diphosphate. In Methanosarcina mazei (strain ATCC BAA-159 / DSM 3647 / Goe1 / Go1 / JCM 11833 / OCM 88) (Methanosarcina frisia), this protein is Arginine--tRNA ligase.